A 566-amino-acid polypeptide reads, in one-letter code: Proline--tRNA ligase (566 aa).

It belongs to the class-II aminoacyl-tRNA synthetase family. ProS type 1 subfamily. In terms of assembly, homodimer.

The protein resides in the cytoplasm. It catalyses the reaction tRNA(Pro) + L-proline + ATP = L-prolyl-tRNA(Pro) + AMP + diphosphate. In terms of biological role, catalyzes the attachment of proline to tRNA(Pro) in a two-step reaction: proline is first activated by ATP to form Pro-AMP and then transferred to the acceptor end of tRNA(Pro). As ProRS can inadvertently accommodate and process non-cognate amino acids such as alanine and cysteine, to avoid such errors it has two additional distinct editing activities against alanine. One activity is designated as 'pretransfer' editing and involves the tRNA(Pro)-independent hydrolysis of activated Ala-AMP. The other activity is designated 'posttransfer' editing and involves deacylation of mischarged Ala-tRNA(Pro). The misacylated Cys-tRNA(Pro) is not edited by ProRS. The polypeptide is Proline--tRNA ligase (Bacillus mycoides (strain KBAB4) (Bacillus weihenstephanensis)).